A 510-amino-acid chain; its full sequence is Maturase K (510 aa).

This sequence belongs to the intron maturase 2 family. MatK subfamily.

The protein localises to the plastid. It localises to the chloroplast. Usually encoded in the trnK tRNA gene intron. Probably assists in splicing its own and other chloroplast group II introns. The chain is Maturase K from Populus trichocarpa (Western balsam poplar).